We begin with the raw amino-acid sequence, 612 residues long: uncharacterized protein (612 aa).

Transmembrane regions (helical) follow at residues 13–33, 38–58, 67–87, 107–127, 144–164, and 189–209; these read IPLT…EWLP, AILV…EGIA, TIMA…IQII, GFIV…AIFL, LLIP…LGTS, and LGLL…PILL. RCK C-terminal domains are found at residues 218–302 and 316–403; these read GNVA…ERGI and NNAG…LLVL. A run of 6 helical transmembrane segments spans residues 419–439, 459–479, 501–521, 525–545, 546–566, and 586–606; these read AIAI…PISV, IYGA…PLGT, LSGY…TEIL, ATVV…GLNP, LAFM…PIGY, and IGAP…MLIY.

This sequence belongs to the SLC13A/DASS transporter (TC 2.A.47) family. NADC subfamily.

The protein resides in the cell membrane. This is an uncharacterized protein from Synechocystis sp. (strain ATCC 27184 / PCC 6803 / Kazusa).